The following is an 848-amino-acid chain: Crooked neck-like protein 1 (848 aa).

Residue T2 is modified to N-acetylalanine. Residues 81–106 (RSSRTPHSTRCRKEDAQPGHHGNGAA) form a disordered region. 17 HAT repeats span residues 222–254 (DYKL…WEES), 256–288 (KEIQ…MEMK), 290–322 (RQVN…MEEM), 324–355 (GNVA…FELR), 357–388 (KEVD…FEEK), 390–425 (AYFA…FEEN), 427–461 (KEFE…FEKK), 471–503 (IIVS…LVES), 505–539 (AEAE…LWIN), 549–585 (KDPE…FEIR), 587–618 (KNLS…LELQ), 620–652 (REFD…LETI), 654–688 (GDID…FEIE), 690–721 (EETE…FELS), 726–767 (GSLT…EFGT), 769–807 (SDKE…YIFP), and 809–834 (DAAN…EKED). Residues 411–628 (MDEHLYVAFA…LREFDRCRKL (218 aa)) are mediates interaction with HSP90. At S503 the chain carries Phosphoserine. Residues 827–848 (KQQQEKEDAEHHPDEDVDESES) form a disordered region. A compositionally biased stretch (basic and acidic residues) spans 828–840 (QQQEKEDAEHHPD).

Belongs to the crooked-neck family. Identified in the spliceosome C complex. Present in a spliceosome complex assembled in vitro containing CRNKL1, HPRP8BP and SNRPB2. Component of the minor spliceosome, which splices U12-type introns. Isoform 2 seems to be predominant in the spliceosome complex. Interacts with PPIL2 (via the PPIase cyclophilin-type domain); they may form a trimeric complex with HSP90. Widely expressed. Highly expressed in testis. Not detected in brain and lung.

It localises to the nucleus. The protein resides in the nucleus speckle. Functionally, involved in pre-mRNA splicing process. As a component of the minor spliceosome, involved in the splicing of U12-type introns in pre-mRNAs. The protein is Crooked neck-like protein 1 (CRNKL1) of Homo sapiens (Human).